The chain runs to 189 residues: Ribose 1,5-bisphosphate phosphokinase PhnN (189 aa).

10 to 17 (GPSGSGKD) provides a ligand contact to ATP.

This sequence belongs to the ribose 1,5-bisphosphokinase family.

The catalysed reaction is alpha-D-ribose 1,5-bisphosphate + ATP = 5-phospho-alpha-D-ribose 1-diphosphate + ADP. It participates in metabolic intermediate biosynthesis; 5-phospho-alpha-D-ribose 1-diphosphate biosynthesis; 5-phospho-alpha-D-ribose 1-diphosphate from D-ribose 5-phosphate (route II): step 3/3. Functionally, catalyzes the phosphorylation of ribose 1,5-bisphosphate to 5-phospho-D-ribosyl alpha-1-diphosphate (PRPP). This chain is Ribose 1,5-bisphosphate phosphokinase PhnN, found in Enterobacter lignolyticus (strain SCF1).